The sequence spans 39 residues: Photosystem II reaction center protein J (39 aa).

The chain crosses the membrane as a helical span at residues 9-29 (LWLVGLVGGLAVITMLGLFIY).

Belongs to the PsbJ family. As to quaternary structure, PSII is composed of 1 copy each of membrane proteins PsbA, PsbB, PsbC, PsbD, PsbE, PsbF, PsbH, PsbI, PsbJ, PsbK, PsbL, PsbM, PsbT, PsbX, PsbY, PsbZ, Psb30/Ycf12, at least 3 peripheral proteins of the oxygen-evolving complex and a large number of cofactors. It forms dimeric complexes.

The protein localises to the plastid. The protein resides in the chloroplast thylakoid membrane. Functionally, one of the components of the core complex of photosystem II (PSII). PSII is a light-driven water:plastoquinone oxidoreductase that uses light energy to abstract electrons from H(2)O, generating O(2) and a proton gradient subsequently used for ATP formation. It consists of a core antenna complex that captures photons, and an electron transfer chain that converts photonic excitation into a charge separation. The sequence is that of Photosystem II reaction center protein J from Phaeodactylum tricornutum (strain CCAP 1055/1).